Reading from the N-terminus, the 229-residue chain is Uracil-DNA glycosylase (229 aa).

Catalysis depends on Asp64, which acts as the Proton acceptor.

The protein belongs to the uracil-DNA glycosylase (UDG) superfamily. UNG family.

The protein resides in the cytoplasm. It carries out the reaction Hydrolyzes single-stranded DNA or mismatched double-stranded DNA and polynucleotides, releasing free uracil.. In terms of biological role, excises uracil residues from the DNA which can arise as a result of misincorporation of dUMP residues by DNA polymerase or due to deamination of cytosine. This is Uracil-DNA glycosylase from Salmonella arizonae (strain ATCC BAA-731 / CDC346-86 / RSK2980).